A 575-amino-acid polypeptide reads, in one-letter code: Transport inhibitor response 1-like protein Os04g0395600 (575 aa).

Positions 1-45 (MTYFPEEVVEHIFSFLPAQRDRNTVSLVCKVWYEIERLSRRGVFV) constitute an F-box domain. Position 69 (lysine 69) interacts with 1D-myo-inositol hexakisphosphate. The segment at 76–77 (DF) is interaction with auxin-responsive proteins. 1D-myo-inositol hexakisphosphate is bound by residues 108 to 109 (KR) and arginine 340. Positions 343-348 (PSDFYV) are interaction with auxin-responsive proteins. Position 396-398 (396-398 (RFR)) interacts with 1D-myo-inositol hexakisphosphate. The tract at residues 400 to 404 (CILEP) is interaction with auxin-responsive proteins. 1D-myo-inositol hexakisphosphate is bound at residue arginine 431. The segment at 459 to 460 (AF) is interaction with auxin-responsive proteins. Residues 479-480 (RK) and arginine 504 each bind 1D-myo-inositol hexakisphosphate.

In terms of assembly, part of a SCF (SKP1-cullin-F-box) protein ligase complex. May interact with auxin and auxin-responsive proteins.

It is found in the nucleus. Its pathway is protein modification; protein ubiquitination. In Oryza sativa subsp. japonica (Rice), this protein is Transport inhibitor response 1-like protein Os04g0395600.